The chain runs to 250 residues: Proteasome subunit alpha type-8 (250 aa).

It belongs to the peptidase T1A family. As to quaternary structure, component of the outer alpha-ring of the 20S proteasome core which is composed of 28 subunits that are arranged in four stacked rings, resulting in a barrel-shaped structure. The catalytic chamber with the active sites is on the inside of the barrel. Interacts with canonical subunits of the spermatoproteasome, including proteasome activators PSME4 (also called PA200) and PSME3 (also called PA28-gamma). Interacts with proteasome-interacting proteins chaperones including CCT6B and CCT2, ubiquitin ligases (TRIP12, NEDD4, TRIM36 and RAD18), and ubiquitin specific proteases such as USP9X, USP34, USP5 and USP47. Interacts with meiotic proteins cyclin dependent kinase CDK1 and the ATPase TRIP13 as well as proteins of the synaptonemal complex SIX6OS1 and SYCE3.

The protein localises to the nucleus. Component of the spermatoproteasome, a proteasome specifically found in testis that promotes acetylation-dependent degradation of histones, thereby participating actively to the exchange of histones during spermatogenesis. The proteasome is a protein complex that degrades unneeded or damaged proteins by proteolysis, a chemical reaction that breaks peptide bonds. Required for 20S core proteasome assembly, essential for the degradation of meiotic proteins RAD51 and RPA1 at late prophase I and the progression of meiosis I during spermatogenesis. Localizes to the synaptonemal complex, a 'zipper'-like structure that holds homologous chromosome pairs in synapsis during meiotic prophase I. The protein is Proteasome subunit alpha type-8 of Mus musculus (Mouse).